Consider the following 143-residue polypeptide: Transcriptional regulator MraZ (143 aa).

2 SpoVT-AbrB domains span residues 5 to 47 and 76 to 119; these read QYEH…SLDE and AVEC…SKEV.

The protein belongs to the MraZ family. As to quaternary structure, forms oligomers.

Its subcellular location is the cytoplasm. It is found in the nucleoid. The polypeptide is Transcriptional regulator MraZ (Caldanaerobacter subterraneus subsp. tengcongensis (strain DSM 15242 / JCM 11007 / NBRC 100824 / MB4) (Thermoanaerobacter tengcongensis)).